A 375-amino-acid polypeptide reads, in one-letter code: Homeobox protein Meis3 (375 aa).

The segment at 25–51 (PETVPAVPGPYGPHRPPQPLPPGLDSD) is disordered. A compositionally biased stretch (pro residues) spans 31–46 (VPGPYGPHRPPQPLPP). The 84-residue stretch at 96 to 179 (GGDVCSSDSF…PIDLVIEDRD (84 aa)) folds into the MEIS N-terminal domain. Disordered regions lie at residues 197–268 (PDQN…KRGI) and 329–348 (NRTGQGAAFSPEGQPIGGYT). Over residues 227–241 (SQSGDNSSDQGDGLD) the composition is skewed to low complexity. Positions 262–324 (RNKKRGIFPK…NARRRIVQPM (63 aa)) form a DNA-binding region, homeobox; TALE-type.

The protein belongs to the TALE/MEIS homeobox family.

It is found in the nucleus. Its function is as follows. Transcriptional regulator which directly modulates PDPK1 expression, thus promoting survival of pancreatic beta-cells. Also regulates expression of NDFIP1, BNIP3, and CCNG1. The polypeptide is Homeobox protein Meis3 (MEIS3) (Homo sapiens (Human)).